The primary structure comprises 424 residues: Steryl acetyl hydrolase 1 (424 aa).

At Ala2 the chain carries N-acetylalanine. At 2–45 (AANSGLDSKVEYYRLQENEIISAVSSEDADQNDAGFRLSTIHLH) the chain is on the cytoplasmic side. The chain crosses the membrane as a helical; Signal-anchor for type II membrane protein span at residues 46 to 66 (LFHGLKFAALLFTVVPVFIIL). Residues 67 to 424 (DSMKIIFQRK…IARILEFMQS (358 aa)) are Lumenal-facing. A glycan (N-linked (GlcNAc...) asparagine) is linked at Asn85. Positions 176–178 (HGG) match the Involved in the stabilization of the negatively charged intermediate by the formation of the oxyanion hole motif. Ser250 is a catalytic residue. N-linked (GlcNAc...) asparagine glycosylation is present at Asn283. His395 is an active-site residue. Asn401 carries an N-linked (GlcNAc...) asparagine glycan.

Belongs to the 'GDXG' lipolytic enzyme family.

It is found in the endoplasmic reticulum membrane. In terms of biological role, required for the deacetylation of acetylated sterols. Involved in the resistance to eugenol and pregnenolone toxicity. This Saccharomyces cerevisiae (strain ATCC 204508 / S288c) (Baker's yeast) protein is Steryl acetyl hydrolase 1 (SAY1).